Reading from the N-terminus, the 271-residue chain is Urease accessory protein UreD (271 aa).

Belongs to the UreD family. As to quaternary structure, ureD, UreF and UreG form a complex that acts as a GTP-hydrolysis-dependent molecular chaperone, activating the urease apoprotein by helping to assemble the nickel containing metallocenter of UreC. The UreE protein probably delivers the nickel.

It localises to the cytoplasm. Functionally, required for maturation of urease via the functional incorporation of the urease nickel metallocenter. The sequence is that of Urease accessory protein UreD from Actinomyces naeslundii.